The sequence spans 270 residues: NAD(P)H-hydrate epimerase (270 aa).

Residues 25–234 enclose the YjeF N-terminal domain; that stretch reads FQQLMDLMQN…DLLAPEAIYQ (210 aa). 73–77 contributes to the (6S)-NADPHX binding site; it reads DNGGQ. Residues asparagine 74 and aspartate 144 each contribute to the K(+) site. (6S)-NADPHX is bound by residues 148 to 154 and glutamate 177; that span reads GVGLYGH. Threonine 180 contacts K(+).

This sequence belongs to the NnrE/AIBP family. It depends on K(+) as a cofactor.

It carries out the reaction (6R)-NADHX = (6S)-NADHX. It catalyses the reaction (6R)-NADPHX = (6S)-NADPHX. Catalyzes the epimerization of the S- and R-forms of NAD(P)HX, a damaged form of NAD(P)H that is a result of enzymatic or heat-dependent hydration. This is a prerequisite for the S-specific NAD(P)H-hydrate dehydratase to allow the repair of both epimers of NAD(P)HX. This Legionella pneumophila serogroup 1 (strain 2300/99 Alcoy) protein is NAD(P)H-hydrate epimerase.